A 959-amino-acid chain; its full sequence is ATP-dependent 6-phosphofructokinase subunit beta (959 aa).

Residues T2–S573 are N-terminal catalytic PFK domain 1. A disordered region spans residues K144–S167. At T152 the chain carries Phosphothreonine. The span at E158 to S167 shows a compositional bias: low complexity. S163 and S171 each carry phosphoserine. ATP contacts are provided by residues G206, R270–C271, and G300–S303. Position 301 (D301) interacts with Mg(2+). Residues S346–D348, R383, M390–R392, E447, R475, and H481–R484 each bind beta-D-fructose 6-phosphate. D348 serves as the catalytic Proton acceptor. The tract at residues A574–L587 is interdomain linker. The interval K588–D959 is C-terminal regulatory PFK domain 2. Residues R658, T716–N720, R754, and Q761–G763 each bind beta-D-fructose 2,6-bisphosphate. A Phosphoserine modification is found at S803. Beta-D-fructose 2,6-bisphosphate-binding positions include K847, H853–Q856, and R935.

Belongs to the phosphofructokinase type A (PFKA) family. ATP-dependent PFK group I subfamily. Eukaryotic two domain clade 'E' sub-subfamily. As to quaternary structure, heterooctamer of 4 alpha and 4 beta chains. Mg(2+) is required as a cofactor.

Its subcellular location is the cytoplasm. The protein localises to the mitochondrion outer membrane. It catalyses the reaction beta-D-fructose 6-phosphate + ATP = beta-D-fructose 1,6-bisphosphate + ADP + H(+). The protein operates within carbohydrate degradation; glycolysis; D-glyceraldehyde 3-phosphate and glycerone phosphate from D-glucose: step 3/4. Allosterically activated by ADP, AMP, or fructose 2,6-bisphosphate, and allosterically inhibited by ATP or citrate. Catalyzes the phosphorylation of D-fructose 6-phosphate to fructose 1,6-bisphosphate by ATP, the first committing step of glycolysis. In Saccharomyces cerevisiae (strain ATCC 204508 / S288c) (Baker's yeast), this protein is ATP-dependent 6-phosphofructokinase subunit beta (PFK2).